Consider the following 706-residue polypeptide: D-(-)-3-hydroxybutyrate oligomer hydrolase (706 aa).

Residues 1–32 form the signal peptide; it reads MTTTSKNCLTLTSIAAAVAAVLVLSACGGGSA. Catalysis depends on Ser-311, which acts as the Charge relay system.

This sequence belongs to the D-(-)-3-hydroxybutyrate oligomer hydrolase family.

It localises to the secreted. It catalyses the reaction (3R)-hydroxybutanoate dimer + H2O = 2 (R)-3-hydroxybutanoate + H(+). The protein operates within lipid metabolism; butanoate metabolism. In terms of biological role, participates in the degradation of poly-3-hydroxybutyrate (PHB). It works downstream of poly(3-hydroxybutyrate) depolymerase, hydrolyzing D(-)-3-hydroxybutyrate oligomers of various length (3HB-oligomers) into 3HB-monomers. This chain is D-(-)-3-hydroxybutyrate oligomer hydrolase, found in Polaromonas sp. (strain JS666 / ATCC BAA-500).